A 52-amino-acid polypeptide reads, in one-letter code: Conotoxin Cal6.25 (52 aa).

Positions 1–22 (MKLTHVLIVAVLVLTVCHLTMA) are cleaved as a signal peptide. 3 disulfides stabilise this stretch: C24–C41, C31–C45, and C40–C50.

In terms of tissue distribution, expressed by the venom duct.

It localises to the secreted. In terms of biological role, probable neurotoxin. The protein is Conotoxin Cal6.25 of Californiconus californicus (California cone).